The chain runs to 150 residues: UPF0756 membrane protein YE1142 (150 aa).

The next 4 membrane-spanning stretches (helical) occupy residues 1-21 (MAAL…GIIS), 51-71 (YGLT…IASG), 88-108 (ILAI…VSLM), and 114-134 (VVAG…GVPV).

This sequence belongs to the UPF0756 family.

It is found in the cell membrane. This Yersinia enterocolitica serotype O:8 / biotype 1B (strain NCTC 13174 / 8081) protein is UPF0756 membrane protein YE1142.